A 125-amino-acid polypeptide reads, in one-letter code: uncharacterized protein (125 aa).

This is an uncharacterized protein from Methanocaldococcus jannaschii (strain ATCC 43067 / DSM 2661 / JAL-1 / JCM 10045 / NBRC 100440) (Methanococcus jannaschii).